The sequence spans 430 residues: Serine hydroxymethyltransferase 1 (430 aa).

(6S)-5,6,7,8-tetrahydrofolate-binding positions include Leu132 and 136–138; that span reads GHL. Lys241 is modified (N6-(pyridoxal phosphate)lysine).

It belongs to the SHMT family. In terms of assembly, homodimer. It depends on pyridoxal 5'-phosphate as a cofactor.

The protein localises to the cytoplasm. The catalysed reaction is (6R)-5,10-methylene-5,6,7,8-tetrahydrofolate + glycine + H2O = (6S)-5,6,7,8-tetrahydrofolate + L-serine. The protein operates within one-carbon metabolism; tetrahydrofolate interconversion. Its pathway is amino-acid biosynthesis; glycine biosynthesis; glycine from L-serine: step 1/1. Its function is as follows. Catalyzes the reversible interconversion of serine and glycine with tetrahydrofolate (THF) serving as the one-carbon carrier. This reaction serves as the major source of one-carbon groups required for the biosynthesis of purines, thymidylate, methionine, and other important biomolecules. Also exhibits THF-independent aldolase activity toward beta-hydroxyamino acids, producing glycine and aldehydes, via a retro-aldol mechanism. This chain is Serine hydroxymethyltransferase 1, found in Bordetella parapertussis (strain 12822 / ATCC BAA-587 / NCTC 13253).